We begin with the raw amino-acid sequence, 494 residues long: Probable cobyric acid synthase (494 aa).

One can recognise a GATase cobBQ-type domain in the interval 249–447 (SVRIAVIRLP…LHGIFFNRRF (199 aa)). Catalysis depends on C331, which acts as the Nucleophile. H439 is an active-site residue.

This sequence belongs to the CobB/CobQ family. CobQ subfamily.

It functions in the pathway cofactor biosynthesis; adenosylcobalamin biosynthesis. Functionally, catalyzes amidations at positions B, D, E, and G on adenosylcobyrinic A,C-diamide. NH(2) groups are provided by glutamine, and one molecule of ATP is hydrogenolyzed for each amidation. The sequence is that of Probable cobyric acid synthase from Methanopyrus kandleri (strain AV19 / DSM 6324 / JCM 9639 / NBRC 100938).